The following is a 229-amino-acid chain: Potassium/proton antiporter CemA (229 aa).

4 consecutive transmembrane segments (helical) span residues 11–31 (TTPF…SLFF), 118–138 (IISF…LVIL), 158–178 (LLAL…ELLI), and 190–210 (LLVC…TFNY).

It belongs to the CemA family.

The protein localises to the plastid. The protein resides in the chloroplast inner membrane. It carries out the reaction K(+)(in) + H(+)(out) = K(+)(out) + H(+)(in). Its function is as follows. Contributes to K(+)/H(+) antiport activity by supporting proton efflux to control proton extrusion and homeostasis in chloroplasts in a light-dependent manner to modulate photosynthesis. Prevents excessive induction of non-photochemical quenching (NPQ) under continuous-light conditions. Indirectly promotes efficient inorganic carbon uptake into chloroplasts. This is Potassium/proton antiporter CemA from Pelargonium hortorum (Common geranium).